A 519-amino-acid polypeptide reads, in one-letter code: Membrane-bound glycerophospholipid O-acyltransferase 2 (519 aa).

The next 6 membrane-spanning stretches (helical) occupy residues 22 to 42, 61 to 81, 88 to 108, 184 to 204, 236 to 256, and 263 to 283; these read PIDQ…AVWF, TLLG…HFLV, CIMI…FALG, FMGI…FIEG, LLVC…LPVE, and FQAT…LLAA. Active-site residues include asparagine 341 and histidine 372. A run of 3 helical transmembrane segments spans residues 365–385, 415–435, and 443–463; these read FFLS…FLTG, LITW…FVLL, and FYSS…LLLP. Residues 497 to 519 are disordered; it reads FSTMNNVCNQNRDTGSRHSSLTQ.

The protein belongs to the membrane-bound acyltransferase family. In terms of tissue distribution, highly expressed in epididymis, brain, testis, and ovary.

The protein localises to the endoplasmic reticulum membrane. The catalysed reaction is a 1-acyl-sn-glycero-3-phosphocholine + an acyl-CoA = a 1,2-diacyl-sn-glycero-3-phosphocholine + CoA. It catalyses the reaction a 1-acyl-sn-glycero-3-phosphoethanolamine + an acyl-CoA = a 1,2-diacyl-sn-glycero-3-phosphoethanolamine + CoA. It carries out the reaction a 1-O-(1Z-alkenyl)-sn-glycero-3-phosphocholine + (9Z)-octadecenoyl-CoA = 1-O-(1Z)-alkenyl-2-(9Z)-octadecenoyl-sn-glycero-3-phosphocholine + CoA. The enzyme catalyses a 1-O-(1Z-alkenyl)-sn-glycero-3-phosphoethanolamine + (9Z)-octadecenoyl-CoA = 1-O-(1Z)-alkenyl-2-(9Z)-octadecenoyl-sn-glycero-3-phosphoethanolamine + CoA. The catalysed reaction is 1-octadecanoyl-sn-glycero-3-phosphoethanolamine + (9Z)-octadecenoyl-CoA = 1-octadecanoyl-2-(9Z-octadecenoyl)-sn-glycero-3-phosphoethanolamine + CoA. It catalyses the reaction 1-octadecanoyl-sn-glycero-3-phosphocholine + (9Z)-octadecenoyl-CoA = 1-octadecanoyl-2-(9Z-octadecenoyl)-sn-glycero-3-phosphocholine + CoA. It carries out the reaction 1-(9Z-octadecenoyl)-sn-glycero-3-phosphoethanolamine + (9Z)-octadecenoyl-CoA = 1,2-di-(9Z-octadecenoyl)-sn-glycero-3-phosphoethanolamine + CoA. The enzyme catalyses 1-hexadecanoyl-sn-glycero-3-phosphoethanolamine + (9Z)-octadecenoyl-CoA = 1-hexadecanoyl-2-(9Z-octadecenoyl)-sn-glycero-3-phosphoethanolamine + CoA. The catalysed reaction is 1-hexadecanoyl-sn-glycero-3-phosphocholine + (9Z)-octadecenoyl-CoA = 1-hexadecanoyl-2-(9Z-octadecenoyl)-sn-glycero-3-phosphocholine + CoA. It catalyses the reaction (9Z)-hexadecenoyl-CoA + 1-hexadecanoyl-sn-glycero-3-phosphocholine = 1-hexadecanoyl-2-(9Z-hexadecenoyl)-sn-glycero-3-phosphocholine + CoA. It carries out the reaction 1-hexadecanoyl-sn-glycero-3-phosphoethanolamine + (9Z)-hexadecenoyl-CoA = 1-hexadecanoyl-2-(9Z)-hexadecenoyl-sn-glycero-3-phosphoethanolamine + CoA. The enzyme catalyses (9Z,12Z)-octadecadienoyl-CoA + 1-hexadecanoyl-sn-glycero-3-phosphocholine = 1-hexadecanoyl-2-(9Z,12Z-octadecadienoyl)-sn-glycero-3-phosphocholine + CoA. Its pathway is lipid metabolism; phospholipid metabolism. Its activity is regulated as follows. Partially inhibited by thimerosal. In terms of biological role, acyltransferase which catalyzes the transfer of an acyl group from an acyl-CoA to a lysophospholipid leading to the production of a phospholipid and participates in the reacylation step of the phospholipid remodeling pathway also known as the Lands cycle. Catalyzes the acylation of lysophosphatidylcholine (1-acyl-sn-glycero-3-phosphocholine or LPC) and to a lesser extend lysophosphatidylethanolamine (1-acyl-sn-glycero-3-phosphoethanolamine or LPE). Does not acylates lysophosphatidic acid (LPA) and lysophosphatidylserine. Prefers oleoyl-CoA as the acyl donor. May be involved in chondrocyte differentiation. The sequence is that of Membrane-bound glycerophospholipid O-acyltransferase 2 from Mus musculus (Mouse).